The following is a 99-amino-acid chain: Aspartyl/glutamyl-tRNA(Asn/Gln) amidotransferase subunit C (99 aa).

The protein belongs to the GatC family. In terms of assembly, heterotrimer of A, B and C subunits.

The catalysed reaction is L-glutamyl-tRNA(Gln) + L-glutamine + ATP + H2O = L-glutaminyl-tRNA(Gln) + L-glutamate + ADP + phosphate + H(+). It carries out the reaction L-aspartyl-tRNA(Asn) + L-glutamine + ATP + H2O = L-asparaginyl-tRNA(Asn) + L-glutamate + ADP + phosphate + 2 H(+). Its function is as follows. Allows the formation of correctly charged Asn-tRNA(Asn) or Gln-tRNA(Gln) through the transamidation of misacylated Asp-tRNA(Asn) or Glu-tRNA(Gln) in organisms which lack either or both of asparaginyl-tRNA or glutaminyl-tRNA synthetases. The reaction takes place in the presence of glutamine and ATP through an activated phospho-Asp-tRNA(Asn) or phospho-Glu-tRNA(Gln). In Ralstonia pickettii (strain 12J), this protein is Aspartyl/glutamyl-tRNA(Asn/Gln) amidotransferase subunit C.